Reading from the N-terminus, the 411-residue chain is MEYAGKDAQLWAAIGREEQRQEGTIELIASENIVSKEVAAAQGSVLTNKYAEGYPGKRYYGGCQFIDQVEQLAIDHAKELFGAAYANVQPHSGSQANMAVYQALLKPGDTILGMGMDAGGHLTHGSKVNFSGKLYHTYGYELSPETEELDYDAILAQAKEIQPQLIVAGASAYSQIIDWDKFRQIADEVGAYLMVDMAHIAGLVATGYHPNPVPVADVVTTTTHKTLRGPRGGMILSKSEELGKKLNSAVFPGTQGGPLEHVIAGKAQAFYEDLQPAFKDYIGQVVKNAAAMAEVFNESETIRVVTGGTANHLLVLDLTKTGLTGKDAQALLDSVMITTNKEAIPNDQRSPFVTSGLRVGTPAITSRGFKEDDAKQVASLIIKALDNADDQTILAEVKEAVHALTQAHPVD.

Position 120–122 (120–122 (GHL)) interacts with (6S)-5,6,7,8-tetrahydrofolate. At K225 the chain carries N6-(pyridoxal phosphate)lysine. (6S)-5,6,7,8-tetrahydrofolate is bound by residues E241 and 350 to 352 (SPF).

It belongs to the SHMT family. As to quaternary structure, homodimer. The cofactor is pyridoxal 5'-phosphate.

Its subcellular location is the cytoplasm. It catalyses the reaction (6R)-5,10-methylene-5,6,7,8-tetrahydrofolate + glycine + H2O = (6S)-5,6,7,8-tetrahydrofolate + L-serine. Its pathway is one-carbon metabolism; tetrahydrofolate interconversion. It participates in amino-acid biosynthesis; glycine biosynthesis; glycine from L-serine: step 1/1. Its function is as follows. Catalyzes the reversible interconversion of serine and glycine with tetrahydrofolate (THF) serving as the one-carbon carrier. This reaction serves as the major source of one-carbon groups required for the biosynthesis of purines, thymidylate, methionine, and other important biomolecules. Also exhibits THF-independent aldolase activity toward beta-hydroxyamino acids, producing glycine and aldehydes, via a retro-aldol mechanism. The sequence is that of Serine hydroxymethyltransferase from Limosilactobacillus fermentum (strain NBRC 3956 / LMG 18251) (Lactobacillus fermentum).